A 1438-amino-acid polypeptide reads, in one-letter code: Pyochelin synthetase PchE (1438 aa).

The 80-residue stretch at Asp-6–Asp-85 folds into the Carrier 1 domain. Ser-46 bears the O-(pantetheine 4'-phosphoryl)serine mark. The interval Arg-136 to Ala-442 is condensation/cyclization. An adenylation region spans residues Arg-563–Arg-950. Residues Glu-1350–Thr-1425 form the Carrier 2 domain. Ser-1385 bears the O-(pantetheine 4'-phosphoryl)serine mark.

Belongs to the NRP synthetase family. Requires pantetheine 4'-phosphate as cofactor.

It carries out the reaction holo-[peptidyl-carrier protein] + L-cysteine + ATP = L-cysteinyl-[peptidyl-carrier protein] + AMP + diphosphate. Its pathway is siderophore biosynthesis. The protein operates within antifungal biosynthesis. In terms of biological role, involved in the biosynthesis of the siderophore pyochelin. Accepts salicylate activated by PchD at the first peptidyl carrier domain (ArCP), and activates and fixes one molecule of cysteine at the second peptidyl carrier domain (PCP1) via a thioester linkage to the phosphopanthetheine moiety. Then catalyzes the condensation reaction between the salicylate bound to the first site and the cysteine bound to the second site, and the cyclization of the cysteine to form the salicyl-thiazolinyl-S-PCP1 intermediate at the second site. When this intermediate is released by the action of a thioesterase, it produces the antifungal antibiotic dihydroaeruginoic acid (Dha or hydroxyphenyl-thiazolinyl-carboxylate). This chain is Pyochelin synthetase PchE, found in Pseudomonas aeruginosa (strain UCBPP-PA14).